A 239-amino-acid polypeptide reads, in one-letter code: Sugar fermentation stimulation protein homolog (239 aa).

Belongs to the SfsA family.

The polypeptide is Sugar fermentation stimulation protein homolog (Agrobacterium fabrum (strain C58 / ATCC 33970) (Agrobacterium tumefaciens (strain C58))).